The following is a 664-amino-acid chain: Peroxisomal acyl-coenzyme A oxidase 1 (664 aa).

Tyrosine 135, glutamine 137, threonine 138, serine 144, glycine 177, arginine 310, glutamine 330, arginine 333, glycine 401, and threonine 422 together coordinate FAD. The Proton acceptor role is filled by glutamate 424. Residue aspartate 426 participates in FAD binding. A disulfide bridge connects residues cysteine 467 and cysteine 576. The short motif at 662–664 (ARL) is the Microbody targeting signal element.

It belongs to the acyl-CoA oxidase family. In terms of assembly, homodimer. The cofactor is FAD. As to expression, expressed mainly in flowers and young seedlings. Lower expression in roots, leaves and bracts.

The protein localises to the peroxisome. The enzyme catalyses a 2,3-saturated acyl-CoA + O2 = a (2E)-enoyl-CoA + H2O2. In terms of biological role, catalyzes the desaturation of both long- and medium-chain acyl-CoAs to 2-trans-enoyl-CoAs. Most active with C14-CoA. Activity on long-chain mono-unsaturated substrates is 40% higher than with the corresponding saturated substrates. Seems to be an important factor in the general metabolism of root tips. May be involved in the biosynthesis of jasmonic acid. This Arabidopsis thaliana (Mouse-ear cress) protein is Peroxisomal acyl-coenzyme A oxidase 1.